Consider the following 919-residue polypeptide: Probable dipeptidyl-aminopeptidase B (919 aa).

Residues 1–89 (MGANSRVNDD…DGYVPSGGKP (89 aa)) are disordered. Residues 1–95 (MGANSRVNDD…GGKPAQRRTR (95 aa)) lie on the Cytoplasmic side of the membrane. Positions 27 to 38 (DSSSTASISLTL) are enriched in low complexity. The span at 44–55 (HTATEPSKSTNG) shows a compositional bias: polar residues. A helical; Signal-anchor for type II membrane protein membrane pass occupies residues 96–116 (IVFWLLVALCVGGWAMAFIIM). Residues 117 to 919 (ATSPNNRHST…RVIRRLLHFG (803 aa)) are Vacuolar-facing. Positions 121–150 (NNRHSTSDSSSGGSESEIVKPNTPHDGKKI) are disordered. Positions 127 to 136 (SDSSSGGSES) are enriched in low complexity. N-linked (GlcNAc...) asparagine glycans are attached at residues asparagine 207, asparagine 303, asparagine 355, asparagine 577, and asparagine 665. The Charge relay system role is filled by serine 760. 2 N-linked (GlcNAc...) asparagine glycosylation sites follow: asparagine 814 and asparagine 819. Catalysis depends on charge relay system residues aspartate 837 and histidine 870.

It belongs to the peptidase S9B family.

It is found in the vacuole membrane. The enzyme catalyses Release of an N-terminal dipeptide, Xaa-Yaa-|-Zaa-, from a polypeptide, preferentially when Yaa is Pro, provided Zaa is neither Pro nor hydroxyproline.. In terms of biological role, type IV dipeptidyl-peptidase which removes N-terminal dipeptides sequentially from polypeptides having unsubstituted N-termini provided that the penultimate residue is proline. The protein is Probable dipeptidyl-aminopeptidase B (DAPB) of Arthroderma otae (strain ATCC MYA-4605 / CBS 113480) (Microsporum canis).